The following is an 81-amino-acid chain: Teretoxin Tsu6.8 (81 aa).

A signal peptide spans 1-21; the sequence is MATSGRLLCLCLVLGLIFESL. The propeptide occupies 22–45; it reads GHPVMGEKRAGENASPSARSLPKR.

It belongs to the teretoxin M (TM) superfamily. Post-translationally, contains 3 disulfide bonds. In terms of tissue distribution, expressed by the venom duct.

It is found in the secreted. In Terebra subulata (Chocolate spotted auger), this protein is Teretoxin Tsu6.8.